A 613-amino-acid chain; its full sequence is Chaperone protein DnaK (613 aa).

Positions 578 to 613 (MYQSQATQGTSQNSSQNNNSQNNNGDTVDADFKESK) are disordered. A compositionally biased stretch (low complexity) spans 580-602 (QSQATQGTSQNSSQNNNSQNNNG).

The protein belongs to the heat shock protein 70 family.

In terms of biological role, acts as a chaperone. In Picrophilus torridus (strain ATCC 700027 / DSM 9790 / JCM 10055 / NBRC 100828 / KAW 2/3), this protein is Chaperone protein DnaK.